Consider the following 163-residue polypeptide: Probable chemoreceptor glutamine deamidase CheD (163 aa).

Belongs to the CheD family.

It catalyses the reaction L-glutaminyl-[protein] + H2O = L-glutamyl-[protein] + NH4(+). Functionally, probably deamidates glutamine residues to glutamate on methyl-accepting chemotaxis receptors (MCPs), playing an important role in chemotaxis. This Borrelia garinii subsp. bavariensis (strain ATCC BAA-2496 / DSM 23469 / PBi) (Borreliella bavariensis) protein is Probable chemoreceptor glutamine deamidase CheD.